Consider the following 575-residue polypeptide: Isocitrate dehydrogenase kinase/phosphatase (575 aa).

Residues 315–321 (APGIRGM) and lysine 336 each bind ATP. The active site involves aspartate 371.

Belongs to the AceK family.

It localises to the cytoplasm. The enzyme catalyses L-seryl-[isocitrate dehydrogenase] + ATP = O-phospho-L-seryl-[isocitrate dehydrogenase] + ADP + H(+). Functionally, bifunctional enzyme which can phosphorylate or dephosphorylate isocitrate dehydrogenase (IDH) on a specific serine residue. This is a regulatory mechanism which enables bacteria to bypass the Krebs cycle via the glyoxylate shunt in response to the source of carbon. When bacteria are grown on glucose, IDH is fully active and unphosphorylated, but when grown on acetate or ethanol, the activity of IDH declines drastically concomitant with its phosphorylation. The chain is Isocitrate dehydrogenase kinase/phosphatase from Citrobacter koseri (strain ATCC BAA-895 / CDC 4225-83 / SGSC4696).